We begin with the raw amino-acid sequence, 1213 residues long: Chitin synthase 3 (1213 aa).

Residues 1 to 97 (MSNFRDSSSP…TPPHQEEEED (97 aa)) form a disordered region. Residues 1–168 (MSNFRDSSSP…KPKHDIYFWK (168 aa)) lie on the Cytoplasmic side of the membrane. The span at 32–44 (IRPERSRMDESHP) shows a compositional bias: basic and acidic residues. The segment covering 75–87 (ELSTSRSHLSNYA) has biased composition (polar residues). Residues 169–189 (VYCYAITFWAPAPLLKLFGLP) form a helical membrane-spanning segment. Residues 190 to 200 (TKDRQFAWREK) are Extracellular-facing. The helical transmembrane segment at 201–221 (IGLISCILYVGAFVAYLTFGF) threads the bilayer. Residues 222–450 (TKTVCSSQVV…TDTIGCIASK (229 aa)) are Cytoplasmic-facing. A helical transmembrane segment spans residues 451 to 471 (VVLYMSLVFILSVVVVKFIMA). The Extracellular segment spans residues 472 to 1016 (CWFKWVTSRK…INSTVHNLFE (545 aa)). N-linked (GlcNAc...) asparagine glycosylation is found at N588 and N1008. A helical membrane pass occupies residues 1017–1037 (LVLVKDLCGTFCFSMQFVIFI). Residues 1038 to 1039 (EL) are Cytoplasmic-facing. A helical transmembrane segment spans residues 1040–1060 (IGTLVLPAAITFTIYVIIVAI). At 1061-1065 (VSKPT) the chain is on the extracellular side. A helical transmembrane segment spans residues 1066–1086 (PVMSLVLLAVIFGLPGCLIVI). The Cytoplasmic portion of the chain corresponds to 1087–1213 (TVSSLSYLVY…LSQGSSSGSS (127 aa)). Residues 1161 to 1213 (ERRSTENRKQQQQQQLTNNSSNNLAVPGAAWDPSNTGGNLIDDLSQGSSSGSS) are disordered.

The protein belongs to the chitin synthase family. Class IV subfamily.

It localises to the cell membrane. It carries out the reaction [(1-&gt;4)-N-acetyl-beta-D-glucosaminyl](n) + UDP-N-acetyl-alpha-D-glucosamine = [(1-&gt;4)-N-acetyl-beta-D-glucosaminyl](n+1) + UDP + H(+). Functionally, polymerizes chitin, a structural polymer of the cell wall and septum, by transferring the sugar moiety of UDP-GlcNAc to the non-reducing end of the growing chitin polymer. This chain is Chitin synthase 3 (CHS3), found in Candida albicans (Yeast).